The chain runs to 305 residues: N-acetylmuramic acid 6-phosphate etherase (305 aa).

An SIS domain is found at 59-222 (TSKALGKGGR…STGVMVKLGK (164 aa)). Glu-87 functions as the Proton donor in the catalytic mechanism. The active site involves Glu-118.

The protein belongs to the GCKR-like family. MurNAc-6-P etherase subfamily. In terms of assembly, homodimer.

It carries out the reaction N-acetyl-D-muramate 6-phosphate + H2O = N-acetyl-D-glucosamine 6-phosphate + (R)-lactate. It participates in amino-sugar metabolism; N-acetylmuramate degradation. Specifically catalyzes the cleavage of the D-lactyl ether substituent of MurNAc 6-phosphate, producing GlcNAc 6-phosphate and D-lactate. The polypeptide is N-acetylmuramic acid 6-phosphate etherase (Crocosphaera subtropica (strain ATCC 51142 / BH68) (Cyanothece sp. (strain ATCC 51142))).